The sequence spans 362 residues: Phenylalanine--tRNA ligase alpha subunit (362 aa).

Residue glutamate 263 participates in Mg(2+) binding.

This sequence belongs to the class-II aminoacyl-tRNA synthetase family. Phe-tRNA synthetase alpha subunit type 1 subfamily. In terms of assembly, tetramer of two alpha and two beta subunits. The cofactor is Mg(2+).

The protein resides in the cytoplasm. The catalysed reaction is tRNA(Phe) + L-phenylalanine + ATP = L-phenylalanyl-tRNA(Phe) + AMP + diphosphate + H(+). This chain is Phenylalanine--tRNA ligase alpha subunit, found in Caulobacter sp. (strain K31).